Here is a 117-residue protein sequence, read N- to C-terminus: MNNIIKMLNDEQMKTDVPDFGAGDTVVVQVRVKEGEKERLQAFEGLVIAKRNRGLHSAFTVRKISNGEGVERAFQTHSPLIASIEVKRRGRVRRAKLYYLRERSGKSARIREKLGTK.

This sequence belongs to the bacterial ribosomal protein bL19 family.

Its function is as follows. This protein is located at the 30S-50S ribosomal subunit interface and may play a role in the structure and function of the aminoacyl-tRNA binding site. The polypeptide is Large ribosomal subunit protein bL19 (Shewanella denitrificans (strain OS217 / ATCC BAA-1090 / DSM 15013)).